The chain runs to 155 residues: MACCYNSPRRLEKSFVLDGVAVSTMAQAYSIMRPKLWSAIPPYNPQLDHHSRRYFRSRVVPPILRKTDQDHGGTGRDGWIVDYFHIFGQGQRYLNRRNWAGAGHSLQQVSGHDYYNSNPKAITTGLNGRFGYRRNTPALRQHTSVFGEVTPFPIF.

The sequence is that of Sperm microtubule associated protein 1 (Spmap1) from Mus musculus (Mouse).